We begin with the raw amino-acid sequence, 153 residues long: Superoxide dismutase [Cu-Zn] (153 aa).

Residues His-45 and His-47 each coordinate Cu cation. Thr-53 carries the phosphothreonine modification. Cys-56 and Cys-145 are disulfide-bonded. Residue Ser-59 is modified to Phosphoserine. Residue His-62 participates in Cu cation binding. Zn(2+) is bound by residues His-62, His-70, His-79, and Asp-82. His-119 contacts Cu cation.

The protein belongs to the Cu-Zn superoxide dismutase family. In terms of assembly, homodimer. The cofactor is Cu cation. Requires Zn(2+) as cofactor.

Its subcellular location is the cytoplasm. The enzyme catalyses 2 superoxide + 2 H(+) = H2O2 + O2. In terms of biological role, destroys radicals which are normally produced within the cells and which are toxic to biological systems. The polypeptide is Superoxide dismutase [Cu-Zn] (Drosophila melanogaster (Fruit fly)).